The following is a 239-amino-acid chain: MARTKKANDEVATDSDSLKLKVAKQAAKLVKDEMVVGLGSGSTANLFIQELGKRVVEEELYIYGVPTSFDSRMMASNSGIPLISLDQCGEIDIAIDGADEVCKKTLSLIKGGGGCHTMEKIVDYHAKEFVVLADEGKLVESLGDKTAVPLEVIPFAYSTVLNKLLDMNTAPAIRSGSGKMGPVITDNGNMIIDVFINIEDAEETETMLNNIPGVLENGIFSKCDKVLVGTSKKVEILKK.

Substrate is bound by residues 40–43, 96–99, and 110–113; these read SGST, DGAD, and KGGG. Catalysis depends on glutamate 119, which acts as the Proton acceptor. Residue lysine 137 participates in substrate binding.

The protein belongs to the ribose 5-phosphate isomerase family. In terms of assembly, homodimer.

The enzyme catalyses aldehydo-D-ribose 5-phosphate = D-ribulose 5-phosphate. It functions in the pathway carbohydrate degradation; pentose phosphate pathway; D-ribose 5-phosphate from D-ribulose 5-phosphate (non-oxidative stage): step 1/1. In terms of biological role, catalyzes the reversible conversion of ribose-5-phosphate to ribulose 5-phosphate. The chain is Ribose-5-phosphate isomerase A from Methanococcus maripaludis (strain DSM 14266 / JCM 13030 / NBRC 101832 / S2 / LL).